The sequence spans 150 residues: SKP1-like protein 17 (150 aa).

The tract at residues Leu92–Asn150 is interaction with the F-box domain of F-box proteins.

It belongs to the SKP1 family. In terms of assembly, part of a SCF (SKP1-cullin-F-box) protein ligase complex. Interacts with CPR1/CPR30. Mainly detected in the siliques.

It localises to the nucleus. The protein operates within protein modification; protein ubiquitination. Its function is as follows. Involved in ubiquitination and subsequent proteasomal degradation of target proteins. Together with CUL1, RBX1 and a F-box protein, it forms a SCF E3 ubiquitin ligase complex. The functional specificity of this complex depends on the type of F-box protein. In the SCF complex, it serves as an adapter that links the F-box protein to CUL1. Probably implicated in incompatibility response after hybridization. In Arabidopsis thaliana (Mouse-ear cress), this protein is SKP1-like protein 17 (ASK17).